The sequence spans 257 residues: Movement protein (257 aa).

The tract at residues 212-257 (NQSKKGSNKYVGKRNDNKGLNKEGKLFDKVRIGQNSESSDAESSSF) is disordered. A compositionally biased stretch (basic and acidic residues) spans 224 to 242 (KRNDNKGLNKEGKLFDKVR). Residues 247 to 257 (SESSDAESSSF) are compositionally biased toward low complexity.

This sequence belongs to the tobamovirus movement protein family.

Its subcellular location is the host cytoplasm. The protein localises to the host cytoskeleton. It is found in the host cell junction. The protein resides in the host plasmodesma. Its function is as follows. Transports viral genome to neighboring plant cells directly through plasmosdesmata, without any budding. The movement protein allows efficient cell to cell propagation, by bypassing the host cell wall barrier. Forms a ribonucleoprotein complex with viral RNA. Binds microtubules and modulates microtubule stability. Can bind double-stranded DNA. The protein is Movement protein (MP) of Pepper mild mottle virus (strain Spain) (PMMV-S).